The chain runs to 475 residues: Sulfate adenylyltransferase subunit 1 (475 aa).

The tr-type G domain occupies 25-239 (KSLLRFLTCG…EVLETVEIQR (215 aa)). Residues 34 to 41 (GSVDDGKS) form a G1 region. 34 to 41 (GSVDDGKS) lines the GTP pocket. Residues 92–96 (GITID) are G2. Positions 113 to 116 (DTPG) are G3. GTP contacts are provided by residues 113-117 (DTPGH) and 168-171 (NKMD). The G4 stretch occupies residues 168 to 171 (NKMD). The tract at residues 206–208 (SAL) is G5.

It belongs to the TRAFAC class translation factor GTPase superfamily. Classic translation factor GTPase family. CysN/NodQ subfamily. Heterodimer composed of CysD, the smaller subunit, and CysN.

The enzyme catalyses sulfate + ATP + H(+) = adenosine 5'-phosphosulfate + diphosphate. The protein operates within sulfur metabolism; hydrogen sulfide biosynthesis; sulfite from sulfate: step 1/3. With CysD forms the ATP sulfurylase (ATPS) that catalyzes the adenylation of sulfate producing adenosine 5'-phosphosulfate (APS) and diphosphate, the first enzymatic step in sulfur assimilation pathway. APS synthesis involves the formation of a high-energy phosphoric-sulfuric acid anhydride bond driven by GTP hydrolysis by CysN coupled to ATP hydrolysis by CysD. The sequence is that of Sulfate adenylyltransferase subunit 1 from Escherichia coli O139:H28 (strain E24377A / ETEC).